The chain runs to 316 residues: KRR1 small subunit processome component (316 aa).

Residues 122 to 192 enclose the KH domain; that stretch reads ACDVIKIGNF…VRRVVEDCMK (71 aa). The span at 279–304 shows a compositional bias: basic and acidic residues; that stretch reads KKLNEQKEKQMEREIERQEERAKDFI. The disordered stretch occupies residues 279–316; it reads KKLNEQKEKQMEREIERQEERAKDFIAPEEEAYKPNQN.

Belongs to the KRR1 family. In terms of assembly, component of the ribosomal small subunit (SSU) processome composed of at least 40 protein subunits and snoRNA U3. Interacts with snoRNA U3. Interacts with MPP10, KRI1 and with ribosomal proteins RPS1A, RPS4A, RPS4B, RPS8A, RPS8B, RPS11A, RPS11B, RPS13, RPS24, RPS25, RPL4A, RPL7B, RPL8, RPL23, RPL25 and RPL28.

The protein localises to the nucleus. It is found in the nucleolus. In terms of biological role, required for 40S ribosome biogenesis. Involved in nucleolar processing of pre-18S ribosomal RNA and ribosome assembly. Essential for vegetative growth. This Saccharomyces cerevisiae (strain RM11-1a) (Baker's yeast) protein is KRR1 small subunit processome component.